The sequence spans 660 residues: Arginine--tRNA ligase, cytoplasmic (660 aa).

The interval 1-72 (MELPVCFYEE…LEEKKKSSKS (72 aa)) is could be involved in the assembly of the multisynthetase complex. L-arginine contacts are provided by residues 200 to 202 (SPN), His211, Tyr384, Asp388, and Gln412. The 'HIGH' region motif lies at 201–212 (PNIAKEMHVGHL). Positions 529–543 (NTAAYLLYAYTRIRS) are interaction with tRNA.

The protein belongs to the class-I aminoacyl-tRNA synthetase family. In terms of assembly, monomer; also part of a multisubunit complex that groups tRNA ligases for Arg, Asp, Glu, Gln, Ile, Leu, Lys, Met and Pro.

It localises to the cytoplasm. The protein localises to the cytosol. The enzyme catalyses tRNA(Arg) + L-arginine + ATP = L-arginyl-tRNA(Arg) + AMP + diphosphate. In terms of biological role, forms part of a macromolecular complex that catalyzes the attachment of specific amino acids to cognate tRNAs during protein synthesis. This Xenopus tropicalis (Western clawed frog) protein is Arginine--tRNA ligase, cytoplasmic (rars1).